The sequence spans 256 residues: Tetraspanin-32 (256 aa).

Helical transmembrane passes span 15–35 (LITN…VVVI), 61–81 (AFYV…LSTI), 90–110 (LMAA…QVAF), and 203–223 (CTSL…WFAI).

This sequence belongs to the tetraspanin (TM4SF) family. Expressed exclusively in hematopoietic tissues. Expression detected in spleen, thymus, bone marrow and peripheral blood leukocytes but not in heart, brain, lung, liver, kidney or testis.

Its subcellular location is the membrane. In Mus musculus (Mouse), this protein is Tetraspanin-32 (Tspan32).